A 341-amino-acid polypeptide reads, in one-letter code: S-adenosylmethionine:tRNA ribosyltransferase-isomerase (341 aa).

This sequence belongs to the QueA family. As to quaternary structure, monomer.

It is found in the cytoplasm. The enzyme catalyses 7-aminomethyl-7-carbaguanosine(34) in tRNA + S-adenosyl-L-methionine = epoxyqueuosine(34) in tRNA + adenine + L-methionine + 2 H(+). It functions in the pathway tRNA modification; tRNA-queuosine biosynthesis. Transfers and isomerizes the ribose moiety from AdoMet to the 7-aminomethyl group of 7-deazaguanine (preQ1-tRNA) to give epoxyqueuosine (oQ-tRNA). The polypeptide is S-adenosylmethionine:tRNA ribosyltransferase-isomerase (Staphylococcus haemolyticus (strain JCSC1435)).